A 247-amino-acid polypeptide reads, in one-letter code: 6-carboxyhexanoate--CoA ligase (247 aa).

Belongs to the BioW family. In terms of assembly, homodimer. Mg(2+) serves as cofactor.

The catalysed reaction is heptanedioate + ATP + CoA = 6-carboxyhexanoyl-CoA + AMP + diphosphate. The protein operates within metabolic intermediate metabolism; pimeloyl-CoA biosynthesis; pimeloyl-CoA from pimelate: step 1/1. In terms of biological role, catalyzes the transformation of pimelate into pimeloyl-CoA with concomitant hydrolysis of ATP to AMP. This chain is 6-carboxyhexanoate--CoA ligase, found in Corynebacterium diphtheriae (strain ATCC 700971 / NCTC 13129 / Biotype gravis).